Reading from the N-terminus, the 111-residue chain is Phosphoribosyl-ATP pyrophosphatase (111 aa).

The protein belongs to the PRA-PH family.

It localises to the cytoplasm. The catalysed reaction is 1-(5-phospho-beta-D-ribosyl)-ATP + H2O = 1-(5-phospho-beta-D-ribosyl)-5'-AMP + diphosphate + H(+). Its pathway is amino-acid biosynthesis; L-histidine biosynthesis; L-histidine from 5-phospho-alpha-D-ribose 1-diphosphate: step 2/9. This is Phosphoribosyl-ATP pyrophosphatase from Pseudomonas putida (strain ATCC 700007 / DSM 6899 / JCM 31910 / BCRC 17059 / LMG 24140 / F1).